The chain runs to 788 residues: Calpastatin (788 aa).

Residues 1–11 (MSQPGPKPAAS) show a composition bias toward pro residues. Disordered regions lie at residues 1-262 (MSQP…TGPV), 289-493 (LLEK…MCSI), and 514-580 (TLAG…SQEQ). A Phosphoserine modification is found at serine 11. A compositionally biased stretch (low complexity) spans 12-21 (PRPSRGAAAR). Positions 38–49 (PGEKKGSDEKKA) are enriched in basic and acidic residues. The span at 65–87 (AATATKVTASSAATSKSPSMSTT) shows a compositional bias: low complexity. A compositionally biased stretch (basic and acidic residues) spans 99 to 119 (EGPDQKRPREQAVKTESKKPQ). Lysine 112 is covalently cross-linked (Glycyl lysine isopeptide (Lys-Gly) (interchain with G-Cter in SUMO2)). N6-acetyllysine is present on lysine 129. Serine 165 is subject to Phosphoserine. The residue at position 216 (threonine 216) is a Phosphothreonine. At serine 219 the chain carries Phosphoserine. Residues 246–256 (GGHEDTNRDDP) are compositionally biased toward basic and acidic residues. The stretch at 251–303 (TNRDDPPYTGPVVLDPMYSTYLEALGIKEGTIPPEYRKLLEKNEGITQPLPDS) is one Inhibitory domain 1 repeat. Residues serine 303 and serine 324 each carry the phosphoserine modification. 2 stretches are compositionally biased toward polar residues: residues 318–328 (SDFTCSSPTGK) and 369–380 (QALQALSDSLGT). The Inhibitory domain 2 repeat unit spans residues 384–436 (DPPSHVSQAEQVKEAKAKEERQEKCGEDEDTVPAEYRLKPAKDKDGKPLLPEP). Basic and acidic residues-rich tracts occupy residues 394–408 (QVKE…QEKC) and 419–430 (YRLKPAKDKDGK). Residues 441 to 453 (KSLSESELIGELS) show a composition bias toward low complexity. Phosphoserine occurs at positions 444, 446, and 453. The residue at position 479 (threonine 479) is a Phosphothreonine. Position 518 is a phosphoserine (serine 518). Basic and acidic residues predominate over residues 522–570 (READPEHEKTVEDKVKEKAKEEEHEKLGEKEETVPPDYRLEEVKDKDGK). One copy of the Inhibitory domain 3 repeat lies at 524–577 (ADPEHEKTVEDKVKEKAKEEEHEKLGEKEETVPPDYRLEEVKDKDGKPLLPKES). Serine 594, serine 605, serine 653, and serine 655 each carry phosphoserine. The tract at residues 620–788 (VVSQTPAPST…PKAKEDARHS (169 aa)) is disordered. The Inhibitory domain 4 repeat unit spans residues 661–714 (PDPDENKPLDDKVKEKIKPEHSEKLGERDDTIPPEYRHLLDNDGKDKPEKPPTK). Basic and acidic residues-rich tracts occupy residues 661-726 (PDPD…RDPI) and 759-788 (ASKD…ARHS).

It belongs to the protease inhibitor I27 (calpastatin) family. As to expression, isoform 2 is the major form in all tissues examined. Isoform 1 accounts for 5-10% in tissues such as skeletal muscle, liver and brain, and 30% in myoblasts. Isoforms 4 and 5 are testis-specific. Isoform 6 is highly expressed in heart and skeletal muscle with lower levels in liver, brain and testis. Isoform 7 is expressed at high levels in liver.

Its function is as follows. Specific inhibition of calpain (calcium-dependent cysteine protease). Plays a key role in postmortem tenderization of meat and have been proposed to be involved in muscle protein degradation in living tissue. The protein is Calpastatin (Cast) of Mus musculus (Mouse).